Here is a 106-residue protein sequence, read N- to C-terminus: uncharacterized protein (106 aa).

A signal peptide spans 1-22 (MKKHPNLLLGFSVYLSAGTKLT). A disordered region spans residues 23 to 46 (IPPEAEQHTAPSDNNKRKRAKCDD).

This is an uncharacterized protein from Arabidopsis thaliana (Mouse-ear cress).